We begin with the raw amino-acid sequence, 110 residues long: Large ribosomal subunit protein uL22 (110 aa).

Basic residues predominate over residues 85–95 (RGTASKIRKPT). The segment at 85-110 (RGTASKIRKPTSHVMVEVSKAQKKEA) is disordered.

The protein belongs to the universal ribosomal protein uL22 family. As to quaternary structure, part of the 50S ribosomal subunit.

This protein binds specifically to 23S rRNA; its binding is stimulated by other ribosomal proteins, e.g. L4, L17, and L20. It is important during the early stages of 50S assembly. It makes multiple contacts with different domains of the 23S rRNA in the assembled 50S subunit and ribosome. Its function is as follows. The globular domain of the protein is located near the polypeptide exit tunnel on the outside of the subunit, while an extended beta-hairpin is found that lines the wall of the exit tunnel in the center of the 70S ribosome. The polypeptide is Large ribosomal subunit protein uL22 (Campylobacter curvus (strain 525.92)).